The following is a 281-amino-acid chain: Endochitinase At2g43610 (281 aa).

A signal peptide spans 1 to 28 (MATQNAILKKALIIFLFTLTIMTGTAFS). In terms of domain architecture, Chitin-binding type-1 spans 29–66 (QNCGTNGCKGNMCCSRWGYCGTTKAYCGTGCQSGPCNS). 4 disulfides stabilise this stretch: cysteine 31–cysteine 42, cysteine 36–cysteine 48, cysteine 41–cysteine 55, and cysteine 59–cysteine 64. Positions 86 to 281 (GTIASVITPA…GVTPGTNLSC (196 aa)) are catalytic. The active-site Proton donor is glutamate 148. N-linked (GlcNAc...) asparagine glycosylation is present at asparagine 278.

Belongs to the glycosyl hydrolase 19 family. Chitinase class I subfamily.

It catalyses the reaction Random endo-hydrolysis of N-acetyl-beta-D-glucosaminide (1-&gt;4)-beta-linkages in chitin and chitodextrins.. The chain is Endochitinase At2g43610 from Arabidopsis thaliana (Mouse-ear cress).